A 411-amino-acid polypeptide reads, in one-letter code: D-ribitol-5-phosphate cytidylyltransferase (411 aa).

It belongs to the IspD/TarI cytidylyltransferase family. IspD subfamily. As to quaternary structure, homodimer.

Its subcellular location is the cytoplasm. The protein localises to the cytosol. It catalyses the reaction D-ribitol 5-phosphate + CTP + H(+) = CDP-L-ribitol + diphosphate. The enzyme catalyses D-ribose 5-phosphate + CTP + H(+) = CDP-D-ribose + diphosphate. The catalysed reaction is D-ribulose 5-phosphate + CTP + H(+) = CDP-D-ribulose + diphosphate. It participates in protein modification; protein glycosylation. Cytidylyltransferase required for protein O-linked mannosylation. Catalyzes the formation of CDP-ribitol nucleotide sugar from D-ribitol 5-phosphate. CDP-ribitol is a substrate of FKTN during the biosynthesis of the phosphorylated O-mannosyl trisaccharide (N-acetylgalactosamine-beta-3-N-acetylglucosamine-beta-4-(phosphate-6-)mannose), a carbohydrate structure present in alpha-dystroglycan (DAG1), which is required for binding laminin G-like domain-containing extracellular proteins with high affinity. Shows activity toward other pentose phosphate sugars and mediates formation of CDP-ribulose or CDP-ribose using CTP and ribulose-5-phosphate or ribose-5-phosphate, respectively. Not involved in dolichol production. The sequence is that of D-ribitol-5-phosphate cytidylyltransferase (crppa) from Xenopus tropicalis (Western clawed frog).